Consider the following 184-residue polypeptide: Late embryogenesis abundant protein (184 aa).

Positions 49–184 (TGNIAEYPTE…KLPGHHNHHP (136 aa)) are disordered. Positions 60-86 (PPAGVAAGTGAAATTAAGVTTSETTTG) are enriched in low complexity. Basic and acidic residues-rich tracts occupy residues 87–98 (QEHHGSLGEHLR) and 122–138 (KDKIKDKLGGGKHKDEQ). Residues 139–159 (TPTTATTTGPTTTTTTTGAAA) are compositionally biased toward low complexity. Residues 160–177 (DQHHEKKGILEKIKEKLP) show a composition bias toward basic and acidic residues.

It belongs to the plant dehydrin family.

Its function is as follows. LEA protein are late embryogenesis abundant in higher plant seed embryos. There are two subsets of LEA proteins (5a, and 5b), the first ones are expressed when the cotyledon weight reach 80 mg and the second set are expressed above 100 mg. The function of those proteins is not known. The sequence is that of Late embryogenesis abundant protein from Raphanus sativus (Radish).